The primary structure comprises 143 residues: Peptide methionine sulfoxide reductase MsrB (143 aa).

One can recognise a MsrB domain in the interval 16-139 (DAELRRRLTP…NSAALNFESR (124 aa)). Residues Cys-55, Cys-58, Cys-104, and Cys-107 each coordinate Zn(2+). Cys-128 (nucleophile) is an active-site residue.

This sequence belongs to the MsrB Met sulfoxide reductase family. Zn(2+) serves as cofactor.

It carries out the reaction L-methionyl-[protein] + [thioredoxin]-disulfide + H2O = L-methionyl-(R)-S-oxide-[protein] + [thioredoxin]-dithiol. The protein is Peptide methionine sulfoxide reductase MsrB of Burkholderia multivorans (strain ATCC 17616 / 249).